Here is a 386-residue protein sequence, read N- to C-terminus: Alkanesulfonate monooxygenase (386 aa).

Belongs to the SsuD family.

The catalysed reaction is an alkanesulfonate + FMNH2 + O2 = an aldehyde + FMN + sulfite + H2O + 2 H(+). Its function is as follows. Catalyzes the desulfonation of aliphatic sulfonates. The polypeptide is Alkanesulfonate monooxygenase (Paraburkholderia phytofirmans (strain DSM 17436 / LMG 22146 / PsJN) (Burkholderia phytofirmans)).